Here is a 213-residue protein sequence, read N- to C-terminus: Large ribosomal subunit protein eL14 (213 aa).

Lysine 79 bears the N6-acetyllysine mark. The residue at position 85 (lysine 85) is an N6-acetyllysine; alternate. Position 85 is an N6-succinyllysine; alternate (lysine 85). A Glycyl lysine isopeptide (Lys-Gly) (interchain with G-Cter in SUMO2) cross-link involves residue lysine 124. At serine 139 the chain carries Phosphoserine. Positions 166-213 are disordered; sequence TAGKKAPAQKAPAQKAAGQKAAPPPKAQKVQKPPAQKAPAPKASGEKA. Residues 169-173 form a 1-1; approximate repeat; sequence KKAPA. Residues 169-188 are 4 X 5 AA tandem repeats of Q-K-A-[APS]-X; the sequence is KKAPAQKAPAQKAAGQKAAP. Repeat copies occupy residues 174–178, 179–183, 184–188, 191–193, and 194–196. The tract at residues 191 to 196 is 2 X 3 AA tandem repeats of K-G-Q; the sequence is KAQKVQ. Lysine 202 bears the N6-succinyllysine mark.

It belongs to the eukaryotic ribosomal protein eL14 family. In terms of assembly, component of the large ribosomal subunit.

The protein resides in the cytoplasm. Component of the large ribosomal subunit. The ribosome is a large ribonucleoprotein complex responsible for the synthesis of proteins in the cell. The sequence is that of Large ribosomal subunit protein eL14 (RPL14) from Sus scrofa (Pig).